A 950-amino-acid polypeptide reads, in one-letter code: Sodium/calcium exchanger Calx (950 aa).

Positions 1–22 (MQLLLKSIFTCALFVIFVYATA) are cleaved as a signal peptide. The Extracellular portion of the chain corresponds to 23 to 120 (QSLLKVQETE…PQRNISVGDR (98 aa)). N-linked (GlcNAc...) asparagine glycosylation is found at Asn39, Asn47, and Asn114. A helical membrane pass occupies residues 121-141 (LVRGFVYFVLLIYLFVGVSII). The Cytoplasmic portion of the chain corresponds to 142 to 179 (ADRFMAAIEAITSIERAVVVKGPNNTKQVMHVRIWNET). Residues 180–200 (VANLTLMALGSSAPEILLSVI) form a helical membrane-spanning segment. At 201–216 (EIYAKDFESGDLGPGT) the chain is on the extracellular side. The helical transmembrane segment at 217–237 (IVGSAAYNLFMIIAVCMIWIP) threads the bilayer. At 238–257 (AGEVRRIRHLRVFFVTALFS) the chain is on the cytoplasmic side. 2 consecutive transmembrane segments (helical) span residues 258–278 (VFAYVWLWLILSVFTPGVILV) and 279–299 (WEAIVTLLFFPLTVLWAYIAE). Topologically, residues 300 to 749 (RRLLVYKYMD…NDDEEEEVPS (450 aa)) are cytoplasmic. The segment at 301 to 318 (RLLVYKYMDKNYRVNKRG) is corresponds to the exchanger inhibitory peptide (XIP) found in other sodium/calcium exchange proteins and thought to be involved in calmodulin binding. Positions 440–551 (DPIRMYFEPG…MIATVMILDD (112 aa)) constitute a Calx-beta 1 domain. Ca(2+) contacts are provided by Glu455, Asp490, Asp515, Asp516, Val518, Glu520, Glu523, Asp550, Asp551, and Asp552. Residues 555–694 (GIFAFTDSVF…LTTAYVRIRE (140 aa)) form the Calx-beta 2 domain. A helical membrane pass occupies residues 750–770 (CFSYVSHFVCLFWKVLFAFVP). Residues 771 to 775 (PTDIC) lie on the Extracellular side of the membrane. Residues 776-796 (GGYVTFVVSIFVIGVITAIIG) form a helical membrane-spanning segment. Over 797-813 (DAASYFGCALNIKDSVT) the chain is Cytoplasmic. Residues 814 to 834 (AILFVALGTSIPDTFASMIAA) traverse the membrane as a helical segment. Topologically, residues 835–848 (KHDEGADNCIGNVT) are extracellular. The N-linked (GlcNAc...) asparagine glycan is linked to Asn846. A helical transmembrane segment spans residues 849–869 (GSNAVNVFLGIGLAWTIAAVY). Over 870 to 883 (HSSHGMTFNVEPGT) the chain is Cytoplasmic. The chain crosses the membrane as a helical span at residues 884–904 (IGFAVALFCGEALIAIMLIMF). The Extracellular portion of the chain corresponds to 905–923 (RRWHKGIGAELGGPKVSKY). A helical membrane pass occupies residues 924-944 (ISAAILVFLWVFYVVICILEA). Over 945-950 (YDVIRV) the chain is Cytoplasmic.

The protein belongs to the Ca(2+):cation antiporter (CaCA) (TC 2.A.19) family. SLC8 subfamily. Ubiquitously expressed with higher expression in head compared to body (at protein level). Enriched in photoreceptor cells of the eye (at protein level). In the adult head, expressed in retina, optic ganglia and all neuronal tissues.

The protein localises to the cell membrane. The protein resides in the cell projection. Its subcellular location is the rhabdomere membrane. The enzyme catalyses Ca(2+)(in) + 3 Na(+)(out) = Ca(2+)(out) + 3 Na(+)(in). Activated by a Na(+) electrochemical gradient but also undergoes Na(2+)-dependent inactivation. Inhibited by micromolar levels of cytoplasmic Ca(2+), which is the opposite of most characterized mammalian homologs. With respect to regulation, exhibits greater extent of inhibition by Ca(2+) than isoform D/1.2. Its activity is regulated as follows. Exhibits greater Na(2+)-dependent inactivation than isoform A/1.1, probably due to greater stability of the inactive Na(2+)-bound form. Na(+)/Ca(2+) antiporter that couples the energy of a Na(+) electrochemical gradient to the movement of Ca(2+) against an electrochemical gradient across a membrane, which contributes to the regulation of cytoplasmic Ca(2+) levels. Mediates Na(+)/Ca(2+) exchange in photoreceptor cells and involved in controlling Ca(2+) levels during phototransduction, affecting magnitude of the photoresponse, activation kinetics, signal amplification, response termination, and light adaptation. Light induced depolarization of photoreceptor cells, resulting in Na(+) and Ca(2+) entry through trp/transient receptor potential protein channels, is essential for photoreceptor cell function but may result in toxic levels of cytoplasmic Ca(2+). Na(+)/Ca(2+) antiporter regulation of Ca(2+) levels protects photoreceptor cells from light-dependent retinal degeneration. The polypeptide is Sodium/calcium exchanger Calx (Drosophila melanogaster (Fruit fly)).